An 89-amino-acid polypeptide reads, in one-letter code: Small ribosomal subunit protein uS15 (89 aa).

Belongs to the universal ribosomal protein uS15 family. Part of the 30S ribosomal subunit. Forms a bridge to the 50S subunit in the 70S ribosome, contacting the 23S rRNA.

Its function is as follows. One of the primary rRNA binding proteins, it binds directly to 16S rRNA where it helps nucleate assembly of the platform of the 30S subunit by binding and bridging several RNA helices of the 16S rRNA. In terms of biological role, forms an intersubunit bridge (bridge B4) with the 23S rRNA of the 50S subunit in the ribosome. This Geobacillus sp. (strain WCH70) protein is Small ribosomal subunit protein uS15.